The primary structure comprises 497 residues: Angiopoietin-1 (497 aa).

The signal sequence occupies residues 1–15 (MTVFLSFAFLAAILT). N-linked (GlcNAc...) asparagine glycans are attached at residues asparagine 92, asparagine 122, asparagine 154, asparagine 243, and asparagine 294. A coiled-coil region spans residues 153–261 (LNQTSRLEIQ…LELMDTVHNL (109 aa)). The Fibrinogen C-terminal domain maps to 276–496 (KEEEKPFRDC…STTMMIRPLD (221 aa)). Disulfide bonds link cysteine 285–cysteine 314 and cysteine 438–cysteine 451.

As to quaternary structure, homooligomer. Interacts with TEK/TIE2. Interacts with SVEP1/polydom. Interacts with THBD; this interaction significantly inhibits the generation of activated PC and TAFIa/CPB2 by the thrombin/thrombomodulin complex.

It localises to the secreted. Functionally, binds and activates TIE2 receptor by inducing its tyrosine phosphorylation. Implicated in endothelial developmental processes later and distinct from that of VEGF. Appears to play a crucial role in mediating reciprocal interactions between the endothelium and surrounding matrix and mesenchyme. Mediates blood vessel maturation/stability. It may play an important role in the heart early development. The protein is Angiopoietin-1 (ANGPT1) of Bos taurus (Bovine).